Reading from the N-terminus, the 331-residue chain is 6-phosphogluconolactonase (331 aa).

The protein belongs to the cycloisomerase 2 family.

It carries out the reaction 6-phospho-D-glucono-1,5-lactone + H2O = 6-phospho-D-gluconate + H(+). The protein operates within carbohydrate degradation; pentose phosphate pathway; D-ribulose 5-phosphate from D-glucose 6-phosphate (oxidative stage): step 2/3. Functionally, catalyzes the hydrolysis of 6-phosphogluconolactone to 6-phosphogluconate. This is 6-phosphogluconolactonase from Citrobacter koseri (strain ATCC BAA-895 / CDC 4225-83 / SGSC4696).